We begin with the raw amino-acid sequence, 501 residues long: Lysine--tRNA ligase (501 aa).

2 residues coordinate Mg(2+): glutamate 411 and glutamate 418.

The protein belongs to the class-II aminoacyl-tRNA synthetase family. Homodimer. Mg(2+) serves as cofactor.

The protein resides in the cytoplasm. The catalysed reaction is tRNA(Lys) + L-lysine + ATP = L-lysyl-tRNA(Lys) + AMP + diphosphate. The polypeptide is Lysine--tRNA ligase (Magnetococcus marinus (strain ATCC BAA-1437 / JCM 17883 / MC-1)).